Reading from the N-terminus, the 322-residue chain is ATP-dependent 6-phosphofructokinase (322 aa).

Gly11 contacts ATP. 21-25 (RAVAR) is a binding site for ADP. ATP-binding positions include 72–73 (RY) and 102–105 (GDGS). Asp103 lines the Mg(2+) pocket. Substrate is bound at residue 125 to 127 (TID). The Proton acceptor role is filled by Asp127. Position 154 (Arg154) interacts with ADP. Substrate is bound by residues Arg162 and 169–171 (MGR). Residues 185 to 187 (GAD) and 213 to 215 (KDY) contribute to the ADP site. Residues Glu222, Arg246, and 252–255 (HVQR) each bind substrate.

Belongs to the phosphofructokinase type A (PFKA) family. ATP-dependent PFK group I subfamily. Prokaryotic clade 'B1' sub-subfamily. Homotetramer. Requires Mg(2+) as cofactor.

The protein resides in the cytoplasm. It catalyses the reaction beta-D-fructose 6-phosphate + ATP = beta-D-fructose 1,6-bisphosphate + ADP + H(+). The protein operates within carbohydrate degradation; glycolysis; D-glyceraldehyde 3-phosphate and glycerone phosphate from D-glucose: step 3/4. Its activity is regulated as follows. Allosterically activated by ADP and other diphosphonucleosides, and allosterically inhibited by phosphoenolpyruvate. Its function is as follows. Catalyzes the phosphorylation of D-fructose 6-phosphate to fructose 1,6-bisphosphate by ATP, the first committing step of glycolysis. The protein is ATP-dependent 6-phosphofructokinase of Pediococcus pentosaceus (strain ATCC 25745 / CCUG 21536 / LMG 10740 / 183-1w).